Consider the following 97-residue polypeptide: Small ribosomal subunit protein bS6 (97 aa).

The protein belongs to the bacterial ribosomal protein bS6 family.

Binds together with bS18 to 16S ribosomal RNA. In Listeria innocua serovar 6a (strain ATCC BAA-680 / CLIP 11262), this protein is Small ribosomal subunit protein bS6.